Consider the following 251-residue polypeptide: UPF0309 protein SGR_3073 (251 aa).

The 186-residue stretch at 36-221 (VADTVASGGR…EQLVARGIEP (186 aa)) folds into the SIS domain.

This sequence belongs to the UPF0309 family.

In Streptomyces griseus subsp. griseus (strain JCM 4626 / CBS 651.72 / NBRC 13350 / KCC S-0626 / ISP 5235), this protein is UPF0309 protein SGR_3073.